A 422-amino-acid polypeptide reads, in one-letter code: Enolase (422 aa).

Residue Gln-162 coordinates (2R)-2-phosphoglycerate. Glu-204 (proton donor) is an active-site residue. Positions 241, 284, and 311 each coordinate Mg(2+). Lys-336, Arg-365, Ser-366, and Lys-387 together coordinate (2R)-2-phosphoglycerate. Residue Lys-336 is the Proton acceptor of the active site.

This sequence belongs to the enolase family. Mg(2+) serves as cofactor.

It localises to the cytoplasm. It is found in the secreted. The protein resides in the cell surface. It carries out the reaction (2R)-2-phosphoglycerate = phosphoenolpyruvate + H2O. It participates in carbohydrate degradation; glycolysis; pyruvate from D-glyceraldehyde 3-phosphate: step 4/5. In terms of biological role, catalyzes the reversible conversion of 2-phosphoglycerate (2-PG) into phosphoenolpyruvate (PEP). It is essential for the degradation of carbohydrates via glycolysis. This is Enolase from Bartonella quintana (strain Toulouse) (Rochalimaea quintana).